Here is a 499-residue protein sequence, read N- to C-terminus: Alpha-amylase 3 (499 aa).

Ca(2+)-binding residues include Asn127 and Asp183. Asp213 acts as the Nucleophile in catalysis. His217 contacts Ca(2+). Residue Glu248 is the Proton donor of the active site.

It belongs to the glycosyl hydrolase 13 family. As to quaternary structure, monomer. It depends on Ca(2+) as a cofactor.

It localises to the cytoplasm. The enzyme catalyses Endohydrolysis of (1-&gt;4)-alpha-D-glucosidic linkages in polysaccharides containing three or more (1-&gt;4)-alpha-linked D-glucose units.. In Dictyoglomus thermophilum (strain ATCC 35947 / DSM 3960 / H-6-12), this protein is Alpha-amylase 3 (amyC).